The following is a 620-amino-acid chain: Kelch-like protein 32 (620 aa).

In terms of domain architecture, BTB spans 42–109 (CDITLIAEEQ…AYTGQILLEP (68 aa)). 6 Kelch repeats span residues 290–346 (TLYI…VMGD), 347–398 (FLFV…AMEE), 399–446 (YLYA…VADG), 447–494 (LLWI…AVQR), 496–547 (LYVL…VHNG), and 549–599 (IYLV…FLPA).

The polypeptide is Kelch-like protein 32 (KLHL32) (Homo sapiens (Human)).